A 569-amino-acid polypeptide reads, in one-letter code: 2-succinyl-5-enolpyruvyl-6-hydroxy-3-cyclohexene-1-carboxylate synthase (569 aa).

This sequence belongs to the TPP enzyme family. MenD subfamily. In terms of assembly, homodimer. Requires Mg(2+) as cofactor. The cofactor is Mn(2+). Thiamine diphosphate is required as a cofactor.

The catalysed reaction is isochorismate + 2-oxoglutarate + H(+) = 5-enolpyruvoyl-6-hydroxy-2-succinyl-cyclohex-3-ene-1-carboxylate + CO2. Its pathway is quinol/quinone metabolism; 1,4-dihydroxy-2-naphthoate biosynthesis; 1,4-dihydroxy-2-naphthoate from chorismate: step 2/7. It participates in quinol/quinone metabolism; menaquinone biosynthesis. Its function is as follows. Catalyzes the thiamine diphosphate-dependent decarboxylation of 2-oxoglutarate and the subsequent addition of the resulting succinic semialdehyde-thiamine pyrophosphate anion to isochorismate to yield 2-succinyl-5-enolpyruvyl-6-hydroxy-3-cyclohexene-1-carboxylate (SEPHCHC). The sequence is that of 2-succinyl-5-enolpyruvyl-6-hydroxy-3-cyclohexene-1-carboxylate synthase from Haemophilus ducreyi (strain 35000HP / ATCC 700724).